We begin with the raw amino-acid sequence, 113 residues long: Transcriptional activator RamA (113 aa).

The HTH araC/xylS-type domain maps to 9–107 (DTIVEWIDDN…HQPPGAYRKE (99 aa)). 2 consecutive DNA-binding regions (H-T-H motif) follow at residues 26-47 (EDIA…LQYK) and 74-97 (VYEI…TRTF).

In terms of biological role, probable transcriptional activator. This Enterobacter cloacae protein is Transcriptional activator RamA (ramA).